We begin with the raw amino-acid sequence, 238 residues long: 2,3,4,5-tetrahydropyridine-2,6-dicarboxylate N-acetyltransferase (238 aa).

Belongs to the transferase hexapeptide repeat family. DapH subfamily.

It carries out the reaction (S)-2,3,4,5-tetrahydrodipicolinate + acetyl-CoA + H2O = L-2-acetamido-6-oxoheptanedioate + CoA. It functions in the pathway amino-acid biosynthesis; L-lysine biosynthesis via DAP pathway; LL-2,6-diaminopimelate from (S)-tetrahydrodipicolinate (acetylase route): step 1/3. Its function is as follows. Catalyzes the transfer of an acetyl group from acetyl-CoA to tetrahydrodipicolinate. This Pseudothermotoga lettingae (strain ATCC BAA-301 / DSM 14385 / NBRC 107922 / TMO) (Thermotoga lettingae) protein is 2,3,4,5-tetrahydropyridine-2,6-dicarboxylate N-acetyltransferase.